We begin with the raw amino-acid sequence, 315 residues long: Annexin Gh1 (315 aa).

4 Annexin repeats span residues 10 to 81 (PSVS…LWAL), 82 to 153 (DPAE…PLVS), 165 to 236 (TLAK…STVK), and 240 to 311 (YPEK…VLAG). Positions 23, 25, 27, and 67 each coordinate Ca(2+). Ile253, Arg255, Gly257, Val295, Asp297, Thr298, and Glu303 together coordinate Ca(2+).

This sequence belongs to the annexin family. In terms of assembly, monomer. Trimer. Oligomerization is calcium-independent. Disassembly of the oligomers seems to be required for calcium-binding.

It localises to the membrane. Binds to phospholipid vesicles in a calcium-dependent manner in vitro. Prefers phosphatidyl-serine containing membranes. May have a role in the membrane cytoskeleton scaffolding or exocytotic processes. May be involved in oxidative stress response. The sequence is that of Annexin Gh1 from Gossypium hirsutum (Upland cotton).